The chain runs to 486 residues: ATP synthase subunit beta (486 aa).

164–171 is a binding site for ATP; it reads GGAGVGKT.

The protein belongs to the ATPase alpha/beta chains family. F-type ATPases have 2 components, CF(1) - the catalytic core - and CF(0) - the membrane proton channel. CF(1) has five subunits: alpha(3), beta(3), gamma(1), delta(1), epsilon(1). CF(0) has four main subunits: a(1), b(1), b'(1) and c(9-12).

The protein localises to the cellular thylakoid membrane. The enzyme catalyses ATP + H2O + 4 H(+)(in) = ADP + phosphate + 5 H(+)(out). Functionally, produces ATP from ADP in the presence of a proton gradient across the membrane. The catalytic sites are hosted primarily by the beta subunits. The polypeptide is ATP synthase subunit beta (Prochlorococcus marinus (strain MIT 9312)).